Here is a 247-residue protein sequence, read N- to C-terminus: Carboxy-S-adenosyl-L-methionine synthase (247 aa).

Residues Y39, 64 to 66 (GCS), 89 to 90 (DN), 117 to 118 (DI), N132, and R199 each bind S-adenosyl-L-methionine.

Belongs to the class I-like SAM-binding methyltransferase superfamily. Cx-SAM synthase family. As to quaternary structure, homodimer.

The enzyme catalyses prephenate + S-adenosyl-L-methionine = carboxy-S-adenosyl-L-methionine + 3-phenylpyruvate + H2O. In terms of biological role, catalyzes the conversion of S-adenosyl-L-methionine (SAM) to carboxy-S-adenosyl-L-methionine (Cx-SAM). In Salmonella enteritidis PT4 (strain P125109), this protein is Carboxy-S-adenosyl-L-methionine synthase.